The chain runs to 167 residues: Endoribonuclease YbeY (167 aa).

Residues His131, His135, and His141 each coordinate Zn(2+).

This sequence belongs to the endoribonuclease YbeY family. It depends on Zn(2+) as a cofactor.

The protein resides in the cytoplasm. Its function is as follows. Single strand-specific metallo-endoribonuclease involved in late-stage 70S ribosome quality control and in maturation of the 3' terminus of the 16S rRNA. The chain is Endoribonuclease YbeY from Rickettsia rickettsii (strain Iowa).